The following is a 554-amino-acid chain: Arginine--tRNA ligase (554 aa).

The short motif at 132 to 142 (ANPTGPIHLGG) is the 'HIGH' region element.

The protein belongs to the class-I aminoacyl-tRNA synthetase family. As to quaternary structure, monomer.

It localises to the cytoplasm. It carries out the reaction tRNA(Arg) + L-arginine + ATP = L-arginyl-tRNA(Arg) + AMP + diphosphate. This chain is Arginine--tRNA ligase, found in Clavibacter sepedonicus (Clavibacter michiganensis subsp. sepedonicus).